The primary structure comprises 350 residues: Phenylalanine--tRNA ligase alpha subunit (350 aa).

E257 is a Mg(2+) binding site.

It belongs to the class-II aminoacyl-tRNA synthetase family. Phe-tRNA synthetase alpha subunit type 1 subfamily. Tetramer of two alpha and two beta subunits. Mg(2+) serves as cofactor.

The protein resides in the cytoplasm. The enzyme catalyses tRNA(Phe) + L-phenylalanine + ATP = L-phenylalanyl-tRNA(Phe) + AMP + diphosphate + H(+). This chain is Phenylalanine--tRNA ligase alpha subunit, found in Listeria monocytogenes serovar 1/2a (strain ATCC BAA-679 / EGD-e).